The primary structure comprises 100 residues: Urease subunit gamma (100 aa).

The protein belongs to the urease gamma subunit family. As to quaternary structure, heterotrimer of UreA (gamma), UreB (beta) and UreC (alpha) subunits. Three heterotrimers associate to form the active enzyme.

The protein resides in the cytoplasm. The enzyme catalyses urea + 2 H2O + H(+) = hydrogencarbonate + 2 NH4(+). It participates in nitrogen metabolism; urea degradation; CO(2) and NH(3) from urea (urease route): step 1/1. The polypeptide is Urease subunit gamma (Cupriavidus taiwanensis (strain DSM 17343 / BCRC 17206 / CCUG 44338 / CIP 107171 / LMG 19424 / R1) (Ralstonia taiwanensis (strain LMG 19424))).